A 130-amino-acid chain; its full sequence is S-adenosylmethionine decarboxylase proenzyme (130 aa).

The active-site Schiff-base intermediate with substrate; via pyruvic acid is the Ser-64. Ser-64 carries the post-translational modification Pyruvic acid (Ser); by autocatalysis. His-69 functions as the Proton acceptor; for processing activity in the catalytic mechanism. The active-site Proton donor; for catalytic activity is Cys-84.

The protein belongs to the prokaryotic AdoMetDC family. Type 1 subfamily. As to quaternary structure, heterotetramer of two alpha and two beta chains arranged as a dimer of alpha/beta heterodimers. It depends on pyruvate as a cofactor. Is synthesized initially as an inactive proenzyme. Formation of the active enzyme involves a self-maturation process in which the active site pyruvoyl group is generated from an internal serine residue via an autocatalytic post-translational modification. Two non-identical subunits are generated from the proenzyme in this reaction, and the pyruvate is formed at the N-terminus of the alpha chain, which is derived from the carboxyl end of the proenzyme. The post-translation cleavage follows an unusual pathway, termed non-hydrolytic serinolysis, in which the side chain hydroxyl group of the serine supplies its oxygen atom to form the C-terminus of the beta chain, while the remainder of the serine residue undergoes an oxidative deamination to produce ammonia and the pyruvoyl group blocking the N-terminus of the alpha chain.

The enzyme catalyses S-adenosyl-L-methionine + H(+) = S-adenosyl 3-(methylsulfanyl)propylamine + CO2. The protein operates within amine and polyamine biosynthesis; S-adenosylmethioninamine biosynthesis; S-adenosylmethioninamine from S-adenosyl-L-methionine: step 1/1. Its function is as follows. Catalyzes the decarboxylation of S-adenosylmethionine to S-adenosylmethioninamine (dcAdoMet), the propylamine donor required for the synthesis of the polyamines spermine and spermidine from the diamine putrescine. This Picrophilus torridus (strain ATCC 700027 / DSM 9790 / JCM 10055 / NBRC 100828 / KAW 2/3) protein is S-adenosylmethionine decarboxylase proenzyme.